Reading from the N-terminus, the 163-residue chain is MPSFDIVSEITMHEVRNAVENANRVLSTRYDFRGVEAVIELNEKNESVKLTTESDFQLEQLIEILIGSCVKRGIEHNSLDIPSEAEHHGKLYSKEVKLKQGIETEMAKKITKLIKDSKIKVQTQIQGEQVRVTGKSRDDLQAAIQLVKGAELGQPFQFNNFRD.

It belongs to the YajQ family.

In terms of biological role, nucleotide-binding protein. The polypeptide is Nucleotide-binding protein APL_1231 (Actinobacillus pleuropneumoniae serotype 5b (strain L20)).